Consider the following 81-residue polypeptide: Large ribosomal subunit protein bL31B (81 aa).

Belongs to the bacterial ribosomal protein bL31 family. Type B subfamily. Part of the 50S ribosomal subunit.

In Lactiplantibacillus plantarum (strain ATCC BAA-793 / NCIMB 8826 / WCFS1) (Lactobacillus plantarum), this protein is Large ribosomal subunit protein bL31B (rpmE2).